The following is a 340-amino-acid chain: Alcohol dehydrogenase patD (340 aa).

Zn(2+) is bound at residue Cys-46. Residue His-47 participates in NAD(+) binding. Zn(2+)-binding residues include His-67, Glu-68, Cys-101, Cys-104, Cys-112, and Cys-154. His-67 contributes to the substrate binding site. NAD(+) contacts are provided by residues 178-183 (GLGGLG), 198-203 (VALSRD), Lys-206, 265-267 (LSI), 289-291 (PSG), and 297-299 (EDA).

It belongs to the zinc-containing alcohol dehydrogenase family. It depends on Zn(2+) as a cofactor.

It is found in the cytoplasm. Its subcellular location is the cytosol. It catalyses the reaction neopatulin + NADPH + H(+) = (E)-ascladiol + NADP(+). The protein operates within mycotoxin biosynthesis; patulin biosynthesis. Alcohol dehydrogenase; part of the gene cluster that mediates the biosynthesis of patulin, an acetate-derived tetraketide mycotoxin produced by several fungal species that shows antimicrobial properties against several bacteria. PatD catalyzes the conversion of neopatulin into E-ascladiol. The pathway begins with the synthesis of 6-methylsalicylic acid by the polyketide synthase (PKS) patK via condensation of acetate and malonate units. The 6-methylsalicylic acid decarboxylase patG then catalyzes the decarboxylation of 6-methylsalicylic acid to yield m-cresol (also known as 3-methylphenol). These first reactions occur in the cytosol. The intermediate m-cresol is then transported into the endoplasmic reticulum where the cytochrome P450 monooxygenase patH converts it to m-hydroxybenzyl alcohol, which is further converted to gentisyl alcohol by the cytochrome P450 monooxygenase patI. The oxidoreductases patJ and patO further convert gentisyl alcohol to isoepoxydon in the vacuole. PatN catalyzes then the transformation of isoepoxydon into phyllostine. The cluster protein patF is responsible for the conversion from phyllostine to neopatulin whereas the alcohol dehydrogenase patD converts neopatulin to E-ascladiol. The steps between isoepoxydon and E-ascladiol occur in the cytosol, and E-ascladiol is probably secreted to the extracellular space by one of the cluster-specific transporters patC or patM. Finally, the secreted patulin synthase patE catalyzes the conversion of E-ascladiol to patulin. The protein is Alcohol dehydrogenase patD of Penicillium expansum (Blue mold rot fungus).